A 360-amino-acid polypeptide reads, in one-letter code: Aminomethyltransferase (360 aa).

This sequence belongs to the GcvT family. The glycine cleavage system is composed of four proteins: P, T, L and H.

It carries out the reaction N(6)-[(R)-S(8)-aminomethyldihydrolipoyl]-L-lysyl-[protein] + (6S)-5,6,7,8-tetrahydrofolate = N(6)-[(R)-dihydrolipoyl]-L-lysyl-[protein] + (6R)-5,10-methylene-5,6,7,8-tetrahydrofolate + NH4(+). Its function is as follows. The glycine cleavage system catalyzes the degradation of glycine. In Legionella pneumophila subsp. pneumophila (strain Philadelphia 1 / ATCC 33152 / DSM 7513), this protein is Aminomethyltransferase.